A 351-amino-acid chain; its full sequence is Probable cell division control protein 7 homolog 2 (351 aa).

The 321-residue stretch at 21–341 folds into the Protein kinase domain; that stretch reads YTPIEKIGEG…ASDALSHPFF (321 aa). Residues 27 to 35 and lysine 50 contribute to the ATP site; that span reads IGEGSFSVV. Aspartate 137 serves as the catalytic Proton acceptor.

This sequence belongs to the protein kinase superfamily. Ser/Thr protein kinase family. CDC7 subfamily. Mg(2+) is required as a cofactor.

It carries out the reaction L-seryl-[protein] + ATP = O-phospho-L-seryl-[protein] + ADP + H(+). It catalyses the reaction L-threonyl-[protein] + ATP = O-phospho-L-threonyl-[protein] + ADP + H(+). In terms of biological role, serine/threonine-protein kinase. Needed for the initiation of DNA synthesis during mitosis as well as for synaptonemal complex formation and commitment to recombination during meiosis. This chain is Probable cell division control protein 7 homolog 2 (CDC7-2), found in Encephalitozoon cuniculi (strain GB-M1) (Microsporidian parasite).